A 376-amino-acid chain; its full sequence is MKVTSYRDAWVEVSLDALTYNVRQFKNHLQEKSRLMAVVKADGYGHGAVPIARRSLEAGAEYLGVAFIDEALQIREAGILAPILLLGFTPSYAVREAVRHDLTLTVYSTETLEAIKDAARSLDKKAKIHIKVDSGMSRIGLRSSEEVISLMTSLQTEEIEVEGIFTHFADADNDESDAYTYKQFETFQGIMEALENEGYSIPIKHCCNSAATIAFPDMHMDMVRVGISLYGLYPGQHLKEILSLQQVMSFKAKPVLIKDVPPHQPISYGLTYETKETSKIATLPIGYADGFSRLLSNVGHVTVHGTACPIVGRICMDQSMIDVSEVQTDVTKDDIVTIFGDENAGYIPLDVVAEQMQTIHYETVCLIGKRVPRHYV.

Lysine 40 serves as the catalytic Proton acceptor; specific for D-alanine. N6-(pyridoxal phosphate)lysine is present on lysine 40. Arginine 138 serves as a coordination point for substrate. The active-site Proton acceptor; specific for L-alanine is the tyrosine 268. Residue methionine 316 participates in substrate binding.

The protein belongs to the alanine racemase family. Pyridoxal 5'-phosphate is required as a cofactor.

The catalysed reaction is L-alanine = D-alanine. The protein operates within amino-acid biosynthesis; D-alanine biosynthesis; D-alanine from L-alanine: step 1/1. Functionally, catalyzes the interconversion of L-alanine and D-alanine. May also act on other amino acids. The sequence is that of Alanine racemase 1 (alr1) from Oceanobacillus iheyensis (strain DSM 14371 / CIP 107618 / JCM 11309 / KCTC 3954 / HTE831).